The primary structure comprises 757 residues: MFEIKESSMEWEGKSLHIKTGEVARQAAGAACVSYGGTVVLAVVTLQKDTAASKKTSDLSGLALVTNFLAKSYALGRIPNGFFKREGKLSEREVLASRVVDRAVRPLIEENLVNEVNIVCKLLAHGNRKVLPEIPALIAASAALQLSGIPFSGPVIGVDVDMRGSEVTCNEIRETEGGLELFVACTEESVVMVEAEASEASEEEVVNALSEALKSAKPVFSFINEFVKSVTTVKPIGVLYDNKELCEKVRAACSGQLESVYNERISSKEKRHNKLGQIYTDTFAQLSDDGYAESEVLFFIKKLEKEIVRKNVLEEGIRPDGRSLTEIRPISIALDYLPGTHGSALFTRGGTQSLVVATLGSYQDEQVMDDIDGERRESVLLHYNFLPYAVGEVGALRAPGRREIGHGRLALKAVKAVLPGKEVFPYTLRLVSEITESDGSSSMATVCGSSLALMDTGVPITKHVAGIAMGLITDGVRSAVLSDISGDEDMLGDMDFKVAGTRNGIVALQMDMKVRGISIATIRDALNQALAGRLHILEKMEHVIAKPRESLKDSAPKILCYKIDKDVVHKVIGSGGKTIRGISSDTSAKIDIDQNNYVYIMADTEEALMEAKTRVDMASGASDSNVPQLKIGELYDGKIVSVVDFGLFVVLPNKQEGLVHISEISKNRVNDIRADYTEGQAVTVRIKDIGSDGKIKLTMRIDEDRVGSGGSSSSPKKRFGAHPRKNGKDNRSNNSERGFNERSGSAEGSSISRKRFF.

Residues D489 and D495 each contribute to the Mg(2+) site. The region spanning 556–615 (PKILCYKIDKDVVHKVIGSGGKTIRGISSDTSAKIDIDQNNYVYIMADTEEALMEAKTRV) is the KH domain. In terms of domain architecture, S1 motif spans 632 to 700 (GELYDGKIVS…SDGKIKLTMR (69 aa)). The interval 702–757 (DEDRVGSGGSSSSPKKRFGAHPRKNGKDNRSNNSERGFNERSGSAEGSSISRKRFF) is disordered. Residues 715–725 (PKKRFGAHPRK) show a composition bias toward basic residues. Polar residues predominate over residues 732–751 (SNNSERGFNERSGSAEGSSI).

Belongs to the polyribonucleotide nucleotidyltransferase family. Requires Mg(2+) as cofactor.

The protein localises to the cytoplasm. The enzyme catalyses RNA(n+1) + phosphate = RNA(n) + a ribonucleoside 5'-diphosphate. Functionally, involved in mRNA degradation. Catalyzes the phosphorolysis of single-stranded polyribonucleotides processively in the 3'- to 5'-direction. In Neorickettsia sennetsu (strain ATCC VR-367 / Miyayama) (Ehrlichia sennetsu), this protein is Polyribonucleotide nucleotidyltransferase.